The chain runs to 517 residues: Cytochrome P450 monooxygenase sdnE (517 aa).

The chain crosses the membrane as a helical span at residues 4-24 (SSILQTLAVLYVLYLLGLIIY). Residue Asn-111 is glycosylated (N-linked (GlcNAc...) asparagine). A helical transmembrane segment spans residues 219–239 (FPVVFIILGLSPRAMLKLVVP). Cys-456 is a binding site for heme.

Belongs to the cytochrome P450 family. Heme is required as a cofactor.

Its subcellular location is the membrane. It functions in the pathway antibiotic biosynthesis. Its function is as follows. Cytochrome P450 monooxygenase; part of the gene cluster that mediates the biosynthesis of sordarin and hypoxysordarin, glycoside antibiotics with a unique tetracyclic diterpene aglycone structure. First, the geranylgeranyl diphosphate synthase sdnC constructs GGDP from farnesyl diphosphate and isopentenyl diphosphate. The diterpene cyclase sdnA then catalyzes the cyclization of GGDP to afford cycloaraneosene. Cycloaraneosene is then hydroxylated four times by the putative cytochrome P450 monooxygenases sdnB, sdnE, sdnF and sdnH to give a hydroxylated cycloaraneosene derivative such as cycloaraneosene-8,9,13,19-tetraol. Although the order of the hydroxylations is unclear, at least C8, C9 and C13 of the cycloaraneosene skeleton are hydroxylated before the sordaricin formation. Dehydration of the 13-hydroxy group of the hydroxylated cycloaraneosene derivative might be catalyzed by an unassigned hypothetical protein such as sdnG and sdnP to construct the cyclopentadiene moiety. The FAD-dependent oxidoreductase sdnN is proposed to catalyze the oxidation at C9 of the hydroxylated cycloaraneosene derivative and also catalyze the Baeyer-Villiger oxidation to give the lactone intermediate. The presumed lactone intermediate would be hydrolyzed to give an acrolein moiety and a carboxylate moiety. Then, [4+2]cycloaddition would occur between the acrolein moiety and the cyclopentadiene moiety to give sordaricin. SdnN might also be involved in the [4+2]cycloaddition after the hypothesized oxidation to accommodate the oxidized product and prompt the [4+2]cycloaddition. GDP-6-deoxy-D-altrose may be biosynthesized from GDP-D-mannose by the putative GDP-mannose-4,6-dehydratase sdnI and the short-chain dehydrogenase sdnK. The glycosyltransferase sdnJ catalyzes the attachment of 6-deoxy-D-altrose onto the 19-hydroxy group of sordaricin to give 4'-O-demethylsordarin. The methyltransferase sdnD would complete the biosynthesis of sordarin. Sordarin can be further modified into hypoxysordarin. The unique acyl chain at the 3'-hydroxy group of hypoxysordarin would be constructed by an iterative type I PKS sdnO and the trans-acting polyketide methyltransferase sdnL. SdnL would be responsible for the introduction of an alpha-methyl group of the polyketide chain. Alternatively, the beta-lactamase-like protein sdnR might be responsible for the cleavage and transfer of the polyketide chain from the PKS sdnO to sordarin. Two putative cytochrome P450 monooxygenases, sdnQ and sdnT, might catalyze the epoxidations of the polyketide chain to complete the biosynthesis of hypoxysordarin. Transcriptional regulators sdnM and sdnS are presumably encoded for the transcriptional regulation of the expression of the sdn gene cluster. In Sordaria araneosa (Pleurage araneosa), this protein is Cytochrome P450 monooxygenase sdnE.